Here is a 297-residue protein sequence, read N- to C-terminus: Calponin-1 (297 aa).

In terms of domain architecture, Calponin-homology (CH) spans 28 to 131; it reads HQREQELREW…STLLALASMA (104 aa). Calponin-like repeat units lie at residues 164 to 189, 204 to 229, and 243 to 268; these read IGLQ…RHLY, ISLQ…RQIF, and VSLQ…RQVY. Residue Thr-170 is modified to Phosphothreonine; by ROCK2. Residue Ser-175 is modified to Phosphoserine; by ROCK2. Residues Thr-180 and Thr-184 each carry the phosphothreonine; by ROCK2 modification. Thr-259 is modified (phosphothreonine; by ROCK2).

The protein belongs to the calponin family. Part of cGMP kinase signaling complex at least composed of ACTA2/alpha-actin, CNN1/calponin H1, PLN/phospholamban, PRKG1 and ITPR1. As to expression, smooth muscle, and tissues containing significant amounts of smooth muscle.

Thin filament-associated protein that is implicated in the regulation and modulation of smooth muscle contraction. It is capable of binding to actin, calmodulin and tropomyosin. The interaction of calponin with actin inhibits the actomyosin Mg-ATPase activity. The polypeptide is Calponin-1 (CNN1) (Homo sapiens (Human)).